We begin with the raw amino-acid sequence, 354 residues long: Thiamine thiazole synthase 2, chloroplastic (354 aa).

The N-terminal 44 residues, 1–44 (MATTAASSLLKSSFAGSRLPSATRTTTPSSVAVATPRAGGGPIR), are a transit peptide targeting the chloroplast. Residues 17 to 49 (SRLPSATRTTTPSSVAVATPRAGGGPIRASISS) form a disordered region. Residues 20-32 (PSATRTTTPSSVA) are compositionally biased toward polar residues. Substrate is bound by residues Ala97, 117–118 (EQ), Gly125, and Val190. Cys219 is subject to 2,3-didehydroalanine (Cys). Residues Asp221, His236, Met288, and 298-300 (RMG) contribute to the substrate site.

It belongs to the THI4 family. As to quaternary structure, homooctamer. The cofactor is Fe cation. During the catalytic reaction, a sulfide is transferred from Cys-219 to a reaction intermediate, generating a dehydroalanine residue. In terms of tissue distribution, highest expression in developing embryos and green leaves and a very low level expression seen in endosperm, roots, etiolated shoots and immature ears.

Its subcellular location is the plastid. The protein localises to the chloroplast. The enzyme catalyses [ADP-thiazole synthase]-L-cysteine + glycine + NAD(+) = [ADP-thiazole synthase]-dehydroalanine + ADP-5-ethyl-4-methylthiazole-2-carboxylate + nicotinamide + 3 H2O + 2 H(+). Its function is as follows. Involved in biosynthesis of the thiamine precursor thiazole. Catalyzes the conversion of NAD and glycine to adenosine diphosphate 5-(2-hydroxyethyl)-4-methylthiazole-2-carboxylic acid (ADT), an adenylated thiazole intermediate. The reaction includes an iron-dependent sulfide transfer from a conserved cysteine residue of the protein to a thiazole intermediate. The enzyme can only undergo a single turnover, which suggests it is a suicide enzyme. May have additional roles in adaptation to various stress conditions and in DNA damage tolerance. This is Thiamine thiazole synthase 2, chloroplastic from Zea mays (Maize).